A 286-amino-acid polypeptide reads, in one-letter code: Bifunctional protein FolD (286 aa).

Residues 166–168 (GQS), serine 191, and isoleucine 232 each bind NADP(+).

It belongs to the tetrahydrofolate dehydrogenase/cyclohydrolase family. As to quaternary structure, homodimer.

The enzyme catalyses (6R)-5,10-methylene-5,6,7,8-tetrahydrofolate + NADP(+) = (6R)-5,10-methenyltetrahydrofolate + NADPH. The catalysed reaction is (6R)-5,10-methenyltetrahydrofolate + H2O = (6R)-10-formyltetrahydrofolate + H(+). It functions in the pathway one-carbon metabolism; tetrahydrofolate interconversion. In terms of biological role, catalyzes the oxidation of 5,10-methylenetetrahydrofolate to 5,10-methenyltetrahydrofolate and then the hydrolysis of 5,10-methenyltetrahydrofolate to 10-formyltetrahydrofolate. In Alkalilimnicola ehrlichii (strain ATCC BAA-1101 / DSM 17681 / MLHE-1), this protein is Bifunctional protein FolD.